Here is a 362-residue protein sequence, read N- to C-terminus: Chorismate synthase (362 aa).

Residue arginine 47 participates in NADP(+) binding. FMN is bound by residues 124-126 (RAS), glycine 286, 301-305 (KPTAT), and arginine 327.

The protein belongs to the chorismate synthase family. Homotetramer. It depends on FMNH2 as a cofactor.

It carries out the reaction 5-O-(1-carboxyvinyl)-3-phosphoshikimate = chorismate + phosphate. It participates in metabolic intermediate biosynthesis; chorismate biosynthesis; chorismate from D-erythrose 4-phosphate and phosphoenolpyruvate: step 7/7. Catalyzes the anti-1,4-elimination of the C-3 phosphate and the C-6 proR hydrogen from 5-enolpyruvylshikimate-3-phosphate (EPSP) to yield chorismate, which is the branch point compound that serves as the starting substrate for the three terminal pathways of aromatic amino acid biosynthesis. This reaction introduces a second double bond into the aromatic ring system. The sequence is that of Chorismate synthase from Prochlorococcus marinus (strain MIT 9303).